A 327-amino-acid chain; its full sequence is Pyruvate dehydrogenase E1 component subunit beta (327 aa).

E60 contacts thiamine diphosphate.

In terms of assembly, heterodimer of an alpha and a beta chain. The cofactor is thiamine diphosphate.

The catalysed reaction is N(6)-[(R)-lipoyl]-L-lysyl-[protein] + pyruvate + H(+) = N(6)-[(R)-S(8)-acetyldihydrolipoyl]-L-lysyl-[protein] + CO2. Its function is as follows. The pyruvate dehydrogenase complex catalyzes the overall conversion of pyruvate to acetyl-CoA and CO(2). It contains multiple copies of three enzymatic components: pyruvate dehydrogenase (E1), dihydrolipoamide acetyltransferase (E2) and lipoamide dehydrogenase (E3). This chain is Pyruvate dehydrogenase E1 component subunit beta (pdhB), found in Acholeplasma laidlawii.